A 104-amino-acid chain; its full sequence is Gastrin (104 aa).

The N-terminal stretch at 1-21 is a signal peptide; that stretch reads MQRLCAHALILVLALAAFCEA. Residues 22 to 58 constitute a propeptide that is removed on maturation; the sequence is SWKPHSQLQDAPVAPGANKGQEPLRMDRLGPASHPRR. Residues 26-70 are disordered; sequence HSQLQDAPVAPGANKGQEPLRMDRLGPASHPRRQLGLQDPPHMVA. The residue at position 87 (Tyr87) is a Sulfotyrosine. Phenylalanine amide is present on Phe92. Phosphoserine is present on Ser96. A propeptide spanning residues 96 to 104 is cleaved from the precursor; sequence SAEEGDQHP.

Belongs to the gastrin/cholecystokinin family. Post-translationally, sulfation enhances proteolytic processing, and blocks peptide degradation. Levels of sulfation differ between proteolytically-cleaved gastrins and between tissues.

The protein localises to the secreted. Functionally, gastrin stimulates the stomach mucosa to produce and secrete hydrochloric acid and the pancreas to secrete its digestive enzymes. It also stimulates smooth muscle contraction and increases blood circulation and water secretion in the stomach and intestine. The sequence is that of Gastrin (GAST) from Ovis aries (Sheep).